Here is a 439-residue protein sequence, read N- to C-terminus: Methylenetetrahydrofolate--tRNA-(uracil-5-)-methyltransferase TrmFO (439 aa).

Residue 7–12 (GAGLAG) coordinates FAD.

Belongs to the MnmG family. TrmFO subfamily. FAD is required as a cofactor.

Its subcellular location is the cytoplasm. It carries out the reaction uridine(54) in tRNA + (6R)-5,10-methylene-5,6,7,8-tetrahydrofolate + NADH + H(+) = 5-methyluridine(54) in tRNA + (6S)-5,6,7,8-tetrahydrofolate + NAD(+). It catalyses the reaction uridine(54) in tRNA + (6R)-5,10-methylene-5,6,7,8-tetrahydrofolate + NADPH + H(+) = 5-methyluridine(54) in tRNA + (6S)-5,6,7,8-tetrahydrofolate + NADP(+). In terms of biological role, catalyzes the folate-dependent formation of 5-methyl-uridine at position 54 (M-5-U54) in all tRNAs. The sequence is that of Methylenetetrahydrofolate--tRNA-(uracil-5-)-methyltransferase TrmFO from Heliobacterium modesticaldum (strain ATCC 51547 / Ice1).